The sequence spans 525 residues: MSL complex subunit 3 (525 aa).

The Tudor-knot domain maps to 13–72; sequence SGEKVLCFEPDPTKARVLYDAKIIDVIIGKDEKGRKIPEYLIHFNGWNRSWDRWAAEEHV. 2 disordered regions span residues 119-148 and 302-383; these read KEKS…KEHR and TTTT…DTSA. The span at 136-146 shows a compositional bias: basic and acidic residues; it reads SCGEKNGGIKE. Residues 172–521 form the MRG domain; that stretch reads DERTITIDIP…CEAHYSTKNP (350 aa). The interval 294 to 444 is required for the histone acetyltransferase activity of the MSL complex; the sequence is FFLPIKESTT…WKLVPDNYPP (151 aa). Ser313 and Ser315 each carry phosphoserine. Positions 320–332 are enriched in low complexity; the sequence is NPSTPQSTESQPP. Residues Ser371 and Ser404 each carry the phosphoserine modification. Phosphothreonine is present on Thr409. Phosphoserine occurs at positions 411 and 415.

In terms of assembly, component of the MSL histone acetyltransferase complex at least composed of the KAT8/MOF, MSL1/hampin, MSL2 and MSL3. Interacts (via the MRG domain) with MSL1 and KAT8/MOF. In terms of tissue distribution, in testis, expression is mostly restricted to the spermatocyte stage and only in a small portion of spermatogonia.

It localises to the nucleus. Its function is as follows. Non-catalytic component of the MSL histone acetyltransferase complex, a multiprotein complex that mediates the majority of histone H4 acetylation at 'Lys-16' (H4K16ac), an epigenetic mark that prevents chromatin compaction. The MSL complex is required for chromosome stability and genome integrity by maintaining homeostatic levels of H4K16ac. The MSL complex is also involved in gene dosage by promoting up-regulation of genes expressed by the X chromosome. X up-regulation is required to compensate for autosomal biallelic expression. The MSL complex also participates in gene dosage compensation by promoting expression of Tsix non-coding RNA. Acts as a histone reader that specifically recognizes and binds histone H4 monomethylated at 'Lys-20' (H4K20Me1) in a DNA-dependent manner and is proposed to be involved in chromosomal targeting of the MSL complex. May play a role X inactivation in females. This chain is MSL complex subunit 3, found in Mus musculus (Mouse).